Consider the following 310-residue polypeptide: Light-independent protochlorophyllide reductase iron-sulfur ATP-binding protein (310 aa).

ATP contacts are provided by residues 53-58 (GIGKST) and K82. Residue S57 participates in Mg(2+) binding. Residues C138 and C172 each contribute to the [4Fe-4S] cluster site. ATP-binding positions include 223–224 (NR) and 247–249 (PAL).

It belongs to the NifH/BchL/ChlL family. Homodimer. Protochlorophyllide reductase is composed of three subunits; BchL, BchN and BchB. [4Fe-4S] cluster serves as cofactor.

It catalyses the reaction chlorophyllide a + oxidized 2[4Fe-4S]-[ferredoxin] + 2 ADP + 2 phosphate = protochlorophyllide a + reduced 2[4Fe-4S]-[ferredoxin] + 2 ATP + 2 H2O. The protein operates within porphyrin-containing compound metabolism; bacteriochlorophyll biosynthesis (light-independent). Functionally, component of the dark-operative protochlorophyllide reductase (DPOR) that uses Mg-ATP and reduced ferredoxin to reduce ring D of protochlorophyllide (Pchlide) to form chlorophyllide a (Chlide). This reaction is light-independent. The L component serves as a unique electron donor to the NB-component of the complex, and binds Mg-ATP. The polypeptide is Light-independent protochlorophyllide reductase iron-sulfur ATP-binding protein (Rhodopseudomonas palustris (strain BisA53)).